Consider the following 250-residue polypeptide: MNVRRVESISAQLEEASSTGGFLYAQNSTKRSIKERLMKLLPCSAAKTSSPAIQNSVEDELEMATVRHRPEALELLEAQSKFTKKELQILYRGFKNECPSGVVNEETFKEIYSQFFPQGDSTTYAHFLFNAFDTDHNGAVSFEDFIKGLSILLRGTVQEKLNWAFNLYDINKDGYITKEEMLDIMKAIYDMMGKCTYPVLKEDAPRQHVETFFQKMDKNKDGVVTIDEFIESCQKDENIMRSMQLFENVI.

The interval 2–44 is KIS; it reads NVRRVESISAQLEEASSTGGFLYAQNSTKRSIKERLMKLLPCS. A phosphoserine mark is found at S17 and S56. Residues 61-117 enclose the EF-hand 1; degenerate domain; it reads LEMATVRHRPEALELLEAQSKFTKKELQILYRGFKNECPSGVVNEETFKEIYSQFFP. EF-hand domains lie at 120-155, 156-191, and 204-239; these read DSTTYAHFLFNAFDTDHNGAVSFEDFIKGLSILLRG, TVQEKLNWAFNLYDINKDGYITKEEMLDIMKAIYDM, and APRQHVETFFQKMDKNKDGVVTIDEFIESCQKDENI. The Ca(2+) site is built by D133, D135, N137, D144, D169, N171, D173, Y175, E180, D217, N219, D221, and E228. The tract at residues 237-250 is interaction with KCND2; the sequence is ENIMRSMQLFENVI.

This sequence belongs to the recoverin family. In terms of assembly, component of heteromultimeric potassium channels. Identified in potassium channel complexes containing KCND1, KCND2, KCND3, KCNIP1, KCNIP2, KCNIP3, KCNIP4, DPP6 and DPP10. Interacts with KCND2. Interacts with KCND3. Interacts with the C-terminus of PSEN2 and probably PSEN1.

Its subcellular location is the cell membrane. The protein resides in the cytoplasm. It is found in the peroxisome. In terms of biological role, regulatory subunit of Kv4/D (Shal)-type voltage-gated rapidly inactivating A-type potassium channels. Modulates KCND2 channel density, inactivation kinetics and rate of recovery from inactivation in a calcium-dependent and isoform-specific manner. Modulates KCND3/Kv4.3 currents. Isoform 4 does not increase KCND2 expression at the cell membrane. Isoform 4 retains KCND3 in the endoplasmic reticulum and negatively regulates its expression at the cell membrane. The chain is Kv channel-interacting protein 4 (KCNIP4) from Macaca fascicularis (Crab-eating macaque).